The sequence spans 359 residues: 5-amino-6-(D-ribitylamino)uracil--L-tyrosine 4-hydroxyphenyl transferase (359 aa).

In terms of domain architecture, Radical SAM core spans 45-282 (VTYVVNANIN…VYAISRIFFK (238 aa)). [4Fe-4S] cluster-binding residues include cysteine 59, cysteine 63, and cysteine 66.

It belongs to the radical SAM superfamily. CofH family. In terms of assembly, consists of two subunits, CofG and CofH. Requires [4Fe-4S] cluster as cofactor.

It carries out the reaction 5-amino-6-(D-ribitylamino)uracil + L-tyrosine + S-adenosyl-L-methionine = 5-amino-5-(4-hydroxybenzyl)-6-(D-ribitylimino)-5,6-dihydrouracil + 2-iminoacetate + 5'-deoxyadenosine + L-methionine + H(+). Its pathway is cofactor biosynthesis; coenzyme F0 biosynthesis. Functionally, catalyzes the radical-mediated synthesis of 5-amino-5-(4-hydroxybenzyl)-6-(D-ribitylimino)-5,6-dihydrouracil from 5-amino-6-(D-ribitylamino)uracil and L-tyrosine. This Methanococcus maripaludis (strain C7 / ATCC BAA-1331) protein is 5-amino-6-(D-ribitylamino)uracil--L-tyrosine 4-hydroxyphenyl transferase.